The sequence spans 741 residues: Penicillin-binding protein 1B (741 aa).

At 1-12 (MYPVNLKLSIKF) the chain is on the cytoplasmic side. The helical; Signal-anchor for type II membrane protein transmembrane segment at 13 to 33 (LFYFFLYFLLIIIIYGVYLYF) threads the bilayer. The Extracellular segment spans residues 34 to 741 (KINQVIHGKI…WIRNHNIFCT (708 aa)). The segment at 139-311 (LRLDPQLIAM…SLYNPWNNPV (173 aa)) is transglycosylase. Glutamate 177 serves as the catalytic Proton donor; for transglycosylase activity. The segment at 395 to 687 (ENAIRHGIQQ…STGAMKIYHN (293 aa)) is transpeptidase. Residue serine 454 is the Acyl-ester intermediate; for transpeptidase activity of the active site.

The protein in the N-terminal section; belongs to the glycosyltransferase 51 family. It in the C-terminal section; belongs to the transpeptidase family.

It is found in the cell membrane. The enzyme catalyses [GlcNAc-(1-&gt;4)-Mur2Ac(oyl-L-Ala-gamma-D-Glu-L-Lys-D-Ala-D-Ala)](n)-di-trans,octa-cis-undecaprenyl diphosphate + beta-D-GlcNAc-(1-&gt;4)-Mur2Ac(oyl-L-Ala-gamma-D-Glu-L-Lys-D-Ala-D-Ala)-di-trans,octa-cis-undecaprenyl diphosphate = [GlcNAc-(1-&gt;4)-Mur2Ac(oyl-L-Ala-gamma-D-Glu-L-Lys-D-Ala-D-Ala)](n+1)-di-trans,octa-cis-undecaprenyl diphosphate + di-trans,octa-cis-undecaprenyl diphosphate + H(+). The catalysed reaction is Preferential cleavage: (Ac)2-L-Lys-D-Ala-|-D-Ala. Also transpeptidation of peptidyl-alanyl moieties that are N-acyl substituents of D-alanine.. Its pathway is cell wall biogenesis; peptidoglycan biosynthesis. In terms of biological role, cell wall formation. Synthesis of cross-linked peptidoglycan from the lipid intermediates. The enzyme has a penicillin-insensitive transglycosylase N-terminal domain (formation of linear glycan strands) and a penicillin-sensitive transpeptidase C-terminal domain (cross-linking of the peptide subunits). In Buchnera aphidicola subsp. Baizongia pistaciae (strain Bp), this protein is Penicillin-binding protein 1B (mrcB).